The sequence spans 197 residues: Beta-crystallin A2 (197 aa).

The segment at 1–11 (MSGTLSQGSSP) is N-terminal arm. Beta/gamma crystallin 'Greek key' domains follow at residues 12–52 (ARLT…KVES) and 53–99 (GAWV…RPLL). The tract at residues 100–105 (CANHSD) is connecting peptide. 2 Beta/gamma crystallin 'Greek key' domains span residues 106–147 (SRVT…KVTS) and 148–196 (GAWV…RRVQ).

Belongs to the beta/gamma-crystallin family. Homo/heterodimer, or complexes of higher-order. The structure of beta-crystallin oligomers seems to be stabilized through interactions between the N-terminal arms.

In terms of biological role, crystallins are the dominant structural components of the vertebrate eye lens. The polypeptide is Beta-crystallin A2 (CRYBA2) (Macropus fuliginosus (Western gray kangaroo)).